We begin with the raw amino-acid sequence, 199 residues long: Imidazoleglycerol-phosphate dehydratase (199 aa).

Belongs to the imidazoleglycerol-phosphate dehydratase family.

It localises to the cytoplasm. It carries out the reaction D-erythro-1-(imidazol-4-yl)glycerol 3-phosphate = 3-(imidazol-4-yl)-2-oxopropyl phosphate + H2O. It functions in the pathway amino-acid biosynthesis; L-histidine biosynthesis; L-histidine from 5-phospho-alpha-D-ribose 1-diphosphate: step 6/9. This Lactococcus lactis subsp. cremoris (strain MG1363) protein is Imidazoleglycerol-phosphate dehydratase.